A 934-amino-acid chain; its full sequence is DNA topoisomerase 1 (934 aa).

The tract at residues M1–L20 is disordered. In terms of domain architecture, Toprim spans R18 to T142. Residues E24 and D111 each coordinate Mg(2+). In terms of domain architecture, Topo IA-type catalytic spans D157 to P616. An interaction with DNA region spans residues S191–Q196. Y342 (O-(5'-phospho-DNA)-tyrosine intermediate) is an active-site residue. 3 disordered regions span residues A746–S765, K842–D892, and L905–D934. The segment covering R911–D934 has biased composition (basic residues).

It belongs to the type IA topoisomerase family. Monomer. Mg(2+) serves as cofactor.

The enzyme catalyses ATP-independent breakage of single-stranded DNA, followed by passage and rejoining.. Functionally, releases the supercoiling and torsional tension of DNA, which is introduced during the DNA replication and transcription, by transiently cleaving and rejoining one strand of the DNA duplex. Introduces a single-strand break via transesterification at a target site in duplex DNA. The scissile phosphodiester is attacked by the catalytic tyrosine of the enzyme, resulting in the formation of a DNA-(5'-phosphotyrosyl)-enzyme intermediate and the expulsion of a 3'-OH DNA strand. The free DNA strand then undergoes passage around the unbroken strand, thus removing DNA supercoils. Finally, in the religation step, the DNA 3'-OH attacks the covalent intermediate to expel the active-site tyrosine and restore the DNA phosphodiester backbone. The protein is DNA topoisomerase 1 of Mycobacterium bovis (strain ATCC BAA-935 / AF2122/97).